Reading from the N-terminus, the 326-residue chain is MNDRFVCSLIEKSDLSNFVKKHSKNVFYDIAKAEAAVHQQTIDTIHFHEVGAIDSIVDIVGFFILWEQLEIEQVYSTPITDGSGTITIAHGVMPIPVPAVMELRKETNLIIQQDFEIKTELVTPTGLAIFKELSPLFVAPEQRLIEKIGYGFGKRETGKFNALRGSIFTETHSKKKRTEHHDQVLKIETNIDNQTPEQLGYVMDLLLEHGALDVFFTPIHMKKNRSAILLTVLTTTEEKEYFTELLFKHTSTIGMRFQTMERSVMDRSFKILETPFGKVHIKKNHYHGLLKESIEYQDCERIAKQYNFTIEEVYRLVQTLNNKTID.

This sequence belongs to the LarC family.

This Enterococcus faecalis (strain ATCC 700802 / V583) protein is Putative nickel insertion protein.